We begin with the raw amino-acid sequence, 82 residues long: Small ribosomal subunit protein eS21 (82 aa).

The protein belongs to the eukaryotic ribosomal protein eS21 family.

The sequence is that of Small ribosomal subunit protein eS21 (RPS21) from Cyanophora paradoxa.